We begin with the raw amino-acid sequence, 187 residues long: Protein Flattop (187 aa).

Residues T97–Q187 are disordered. Positions E122–T131 are enriched in polar residues. A compositionally biased stretch (basic and acidic residues) spans K169–Q187.

The protein belongs to the Flattop family.

The protein resides in the cytoplasm. It is found in the cytoskeleton. The protein localises to the cilium basal body. Its subcellular location is the cell projection. It localises to the cilium. The protein resides in the apical cell membrane. It is found in the cilium axoneme. Microtubule inner protein (MIP) part of the dynein-decorated doublet microtubules (DMTs) in cilia axoneme. Acts as a regulator of cilium basal body docking and positioning in mono- and multiciliated cells. Regulates basal body docking and cilia formation in multiciliated lung cells. Regulates kinocilium positioning and stereocilia bundle morphogenesis in the inner ear. This Salmo salar (Atlantic salmon) protein is Protein Flattop.